The sequence spans 894 residues: Glutamate receptor 3 (894 aa).

A signal peptide spans 1-28 (MARQKKMGQSVLRAVFFLVLGLLGHSHG). Residues 29 to 552 (GFPNTISIGG…GVFSFLDPLA (524 aa)) are Extracellular-facing. 5 N-linked (GlcNAc...) asparagine glycosylation sites follow: Asn-63, Asn-266, Asn-380, Asn-415, and Asn-422. Cys-91 and Cys-340 are disulfide-bonded. The L-glutamate site is built by Pro-508, Thr-510, and Arg-515. Residues 553 to 573 (YEIWMCIVFAYIGVSVVLFLV) form a helical membrane-spanning segment. The Cytoplasmic segment spans residues 574 to 602 (SRFSPYEWHLEDNNEEPRDPQSPPDPPNE). The helical; Pore-forming intramembrane region spans 603–618 (FGIFNSLWFSLGAFMQ). The stretch at 619–621 (QGC) is an intramembrane region. A lipid anchor (S-palmitoyl cysteine) is attached at Cys-621. Residues 622–627 (DISPRS) are Cytoplasmic-facing. The chain crosses the membrane as a helical span at residues 628–648 (LSGRIVGGVWWFFTLIIISSY). Residues 649–823 (TANLAAFLTV…DKTSALSLSN (175 aa)) lie on the Extracellular side of the membrane. Positions 686, 687, and 737 each coordinate L-glutamate. Cys-750 and Cys-805 are disulfide-bonded. The helical transmembrane segment at 824 to 844 (VAGVFYILVGGLGLAMMVALI) threads the bilayer. Topologically, residues 845 to 894 (EFCYKSRAESKRMKLTKNTQNFKPAPATNTQNYATYREGYNVYGTESVKI) are cytoplasmic. A lipid anchor (S-palmitoyl cysteine) is attached at Cys-847. Tyr-877 and Tyr-887 each carry phosphotyrosine.

The protein belongs to the glutamate-gated ion channel (TC 1.A.10.1) family. GRIA3 subfamily. In terms of assembly, homotetramer or heterotetramer of pore-forming glutamate receptor subunits. Tetramers may be formed by the dimerization of dimers. Interacts with PICK1, GRIP1 and GRIP2. Found in a complex with GRIA1, GRIA2, GRIA4, CNIH2, CNIH3, CACNG2, CACNG3, CACNG4, CACNG5, CACNG7 and CACNG8. Interacts with CACNG5. Found in a complex with GRIA1, GRIA2, GRIA4, DLG4, CACNG8 and CNIH2.

The protein resides in the cell membrane. The protein localises to the postsynaptic cell membrane. It is found in the postsynaptic density membrane. The catalysed reaction is Ca(2+)(in) = Ca(2+)(out). In terms of biological role, ionotropic glutamate receptor that functions as a ligand-gated cation channel, gated by L-glutamate and glutamatergic agonists such as alpha-amino-3-hydroxy-5-methyl-4-isoxazolepropionic acid (AMPA), quisqualic acid, and kainic acid. L-glutamate acts as an excitatory neurotransmitter at many synapses in the central nervous system and plays an important role in fast excitatory synaptic transmission by inducing long-term potentiation. Binding of the excitatory neurotransmitter L-glutamate induces a conformation change, leading to the opening of the cation channel, and thereby converts the chemical signal to an electrical impulse upon entry of calcium. The receptor then desensitizes rapidly and enters a transient inactive state, characterized by the presence of bound agonist. In the presence of CACNG8, shows resensitization which is characterized by a delayed accumulation of current flux upon continued application of glutamate. The polypeptide is Glutamate receptor 3 (Homo sapiens (Human)).